Consider the following 830-residue polypeptide: Periplasmic nitrate reductase (830 aa).

A signal peptide (tat-type signal) is located at residues 1-31 (MKLSRRDFMKANAAVAAAAAAGMTIPTVAKA). One can recognise a 4Fe-4S Mo/W bis-MGD-type domain in the interval 39–95 (IKWDKAPCRFCGTGCGVLVGTQNGRIVASQGDPDSPVNRGLNCIKGYFLPKIMYGKD). Positions 46, 49, 53, and 81 each coordinate [4Fe-4S] cluster. Mo-bis(molybdopterin guanine dinucleotide) is bound by residues Lys83, Gln150, Asn175, Cys179, 212–219 (WGSNMAEM), 243–247 (STYEH), 262–264 (QTD), Met372, Gln376, Asn482, 508–509 (SD), Lys531, Asp558, and 718–727 (TGRVLEHWHT). Substrate is bound at residue Phe794. Residues Asn802 and Lys819 each coordinate Mo-bis(molybdopterin guanine dinucleotide).

It belongs to the prokaryotic molybdopterin-containing oxidoreductase family. NasA/NapA/NarB subfamily. Component of the periplasmic nitrate reductase NapAB complex composed of NapA and NapB. [4Fe-4S] cluster is required as a cofactor. Requires Mo-bis(molybdopterin guanine dinucleotide) as cofactor. Post-translationally, predicted to be exported by the Tat system. The position of the signal peptide cleavage has not been experimentally proven.

The protein localises to the periplasm. The enzyme catalyses 2 Fe(II)-[cytochrome] + nitrate + 2 H(+) = 2 Fe(III)-[cytochrome] + nitrite + H2O. Catalytic subunit of the periplasmic nitrate reductase complex NapAB. Receives electrons from NapB and catalyzes the reduction of nitrate to nitrite. This chain is Periplasmic nitrate reductase, found in Yersinia pestis bv. Antiqua (strain Antiqua).